We begin with the raw amino-acid sequence, 876 residues long: Leucine--tRNA ligase (876 aa).

The short motif at 43 to 53 (PYPSGRIHMGH) is the 'HIGH' region element. The short motif at 632–636 (KMSKS) is the 'KMSKS' region element. Lys635 contacts ATP.

Belongs to the class-I aminoacyl-tRNA synthetase family.

Its subcellular location is the cytoplasm. The catalysed reaction is tRNA(Leu) + L-leucine + ATP = L-leucyl-tRNA(Leu) + AMP + diphosphate. This Rhodopseudomonas palustris (strain ATCC BAA-98 / CGA009) protein is Leucine--tRNA ligase.